The chain runs to 602 residues: Transcription factor COE4 (602 aa).

Residues 64 to 67 form an interaction with DNA region; that stretch reads RKSN. A C5-type zinc finger spans residues 152–171; it reads CRVLLTHEIMCSRCCDRKSC. Interaction with DNA stretches follow at residues 198-205 and 237-240; these read NCLKNAGN and NNSK. The IPT/TIG domain maps to 256–338; that stretch reads PCIKAISPGE…CKGCPGRFVY (83 aa). Disordered regions lie at residues 448–476 and 558–602; these read PEPG…SGYG and PVLR…LAYS. Pro residues predominate over residues 560–569; it reads LRPPSSPPQA.

It belongs to the COE family. As to quaternary structure, forms either a homodimer or a heterodimer with a related family member. Interacts with MAPK3/ERK1. Interacts with STAT5A. Most highly expressed in cytotoxic NK cells, especially CD16(+) NK cells, followed by CD8(+) T-cells.

It localises to the nucleus. Functionally, transcription factor. Binds to specific sequence motif 5'-CCCNNG[GA]G-3' in regulatory elements of putative target immunoregulatory genes such as NKG7, GZMA, and TBX21. Positively modulates transcription of NKG7. May play a role in regulating FAS/CD95-mediated apoptosis in cytotoxic NK cells and T-cells, probably downstream of interleukin IL2 signaling. The protein is Transcription factor COE4 (EBF4) of Homo sapiens (Human).